A 207-amino-acid polypeptide reads, in one-letter code: Large ribosomal subunit protein uL4 (207 aa).

The disordered stretch occupies residues 49 to 78; that stretch reads HAVKNRSAVSGGGRKPWRQKGTGRARQGSI.

The protein belongs to the universal ribosomal protein uL4 family. In terms of assembly, part of the 50S ribosomal subunit.

In terms of biological role, one of the primary rRNA binding proteins, this protein initially binds near the 5'-end of the 23S rRNA. It is important during the early stages of 50S assembly. It makes multiple contacts with different domains of the 23S rRNA in the assembled 50S subunit and ribosome. Functionally, forms part of the polypeptide exit tunnel. The protein is Large ribosomal subunit protein uL4 of Streptococcus pneumoniae serotype 2 (strain D39 / NCTC 7466).